We begin with the raw amino-acid sequence, 40 residues long: Photosystem II reaction center protein J (40 aa).

A helical membrane pass occupies residues 8 to 28 (IPLWLVGTVAGILVIGLIGIF).

The protein belongs to the PsbJ family. PSII is composed of 1 copy each of membrane proteins PsbA, PsbB, PsbC, PsbD, PsbE, PsbF, PsbH, PsbI, PsbJ, PsbK, PsbL, PsbM, PsbT, PsbX, PsbY, PsbZ, Psb30/Ycf12, at least 3 peripheral proteins of the oxygen-evolving complex and a large number of cofactors. It forms dimeric complexes.

Its subcellular location is the plastid. It localises to the chloroplast thylakoid membrane. Functionally, one of the components of the core complex of photosystem II (PSII). PSII is a light-driven water:plastoquinone oxidoreductase that uses light energy to abstract electrons from H(2)O, generating O(2) and a proton gradient subsequently used for ATP formation. It consists of a core antenna complex that captures photons, and an electron transfer chain that converts photonic excitation into a charge separation. The polypeptide is Photosystem II reaction center protein J (Gnetum parvifolium (Small-leaved jointfir)).